Reading from the N-terminus, the 451-residue chain is Epi-neemfruitin B 7-O-acetyltransferse L7AT (451 aa).

Catalysis depends on proton acceptor residues H165 and D384.

It belongs to the plant acyltransferase family. In terms of assembly, monomer. As to expression, mainly expressed in petioles and, to a lower extent, in roots.

It catalyses the reaction epi-neemfruitin B + acetyl-CoA = 7-acetyl-epi-neemfruitin B + CoA. The protein operates within secondary metabolite biosynthesis; terpenoid biosynthesis. In terms of biological role, acetyltransferase involved in the biosynthesis of limonoids triterpene natural products such as azadirachtin, an antifeedant widely used as bioinsecticide, and possessing many medicinal applications including anti-tumoral, anti-malarial, anti-rheumatic, antibacterial, anti-inflammatory, anti-pyretic and diuretic effects. Catalyzes the formation of 7-acetyl-epi-neemfruitin B from epi-neemfruitin B. In Melia azedarach (Chinaberry tree), this protein is Epi-neemfruitin B 7-O-acetyltransferse L7AT.